Consider the following 79-residue polypeptide: Cytoinsectotoxin-3 (79 aa).

The protein belongs to the cationic peptide 06 (cytoinsectotoxin) family. As to expression, expressed by the venom gland.

The protein resides in the secreted. Its function is as follows. Insecticidal and antimicrobial peptide. Has insecticidal activity against larvae of flesh fly S.carnaria. Has antibacterial activity against Gram-positive bacterium B.subtilis B-501 (MIC=0.63 uM) and Gram-negative bacterium E.coli DH5alpha (MIC=2.5 uM). The polypeptide is Cytoinsectotoxin-3 (Lachesana tarabaevi (Spider)).